A 438-amino-acid polypeptide reads, in one-letter code: Putative phospholipase A2 (438 aa).

The active-site Nucleophile is S257. Residues D291 and H368 each act as charge relay system in the active site.

Belongs to the serine esterase family.

It is found in the cytoplasm. Its subcellular location is the nucleus. It catalyses the reaction a 1-O-alkyl-2-acetyl-sn-glycero-3-phosphocholine + H2O = a 1-O-alkyl-sn-glycero-3-phosphocholine + acetate + H(+). The sequence is that of Putative phospholipase A2 from Schizosaccharomyces pombe (strain 972 / ATCC 24843) (Fission yeast).